The chain runs to 149 residues: uncharacterized protein (149 aa).

The segment covering 130–144 (ESNVTKENIEIKEEK) has biased composition (basic and acidic residues). Residues 130–149 (ESNVTKENIEIKEEKEENSE) are disordered.

This is an uncharacterized protein from Methanocaldococcus jannaschii (strain ATCC 43067 / DSM 2661 / JAL-1 / JCM 10045 / NBRC 100440) (Methanococcus jannaschii).